Here is a 368-residue protein sequence, read N- to C-terminus: 4-hydroxy-3-methylbut-2-en-1-yl diphosphate synthase (flavodoxin) (368 aa).

[4Fe-4S] cluster-binding residues include Cys271, Cys274, Cys306, and Glu313.

It belongs to the IspG family. Requires [4Fe-4S] cluster as cofactor.

The enzyme catalyses (2E)-4-hydroxy-3-methylbut-2-enyl diphosphate + oxidized [flavodoxin] + H2O + 2 H(+) = 2-C-methyl-D-erythritol 2,4-cyclic diphosphate + reduced [flavodoxin]. It functions in the pathway isoprenoid biosynthesis; isopentenyl diphosphate biosynthesis via DXP pathway; isopentenyl diphosphate from 1-deoxy-D-xylulose 5-phosphate: step 5/6. Functionally, converts 2C-methyl-D-erythritol 2,4-cyclodiphosphate (ME-2,4cPP) into 1-hydroxy-2-methyl-2-(E)-butenyl 4-diphosphate. In Haemophilus influenzae (strain PittGG), this protein is 4-hydroxy-3-methylbut-2-en-1-yl diphosphate synthase (flavodoxin).